Consider the following 289-residue polypeptide: Probable porphobilinogen deaminase (289 aa).

Cysteine 233 carries the post-translational modification S-(dipyrrolylmethanemethyl)cysteine.

It belongs to the HMBS family. Dipyrromethane serves as cofactor.

The enzyme catalyses 4 porphobilinogen + H2O = hydroxymethylbilane + 4 NH4(+). Its pathway is porphyrin-containing compound metabolism; protoporphyrin-IX biosynthesis; coproporphyrinogen-III from 5-aminolevulinate: step 2/4. Functionally, tetrapolymerization of the monopyrrole PBG into the hydroxymethylbilane pre-uroporphyrinogen in several discrete steps. The sequence is that of Probable porphobilinogen deaminase (hemC) from Methanothermobacter thermautotrophicus (strain ATCC 29096 / DSM 1053 / JCM 10044 / NBRC 100330 / Delta H) (Methanobacterium thermoautotrophicum).